We begin with the raw amino-acid sequence, 115 residues long: U3-lycotoxin-Ls1l (115 aa).

The first 20 residues, 1-20 (MKFVLLFGVLLVTLFSYSSA), serve as a signal peptide directing secretion. A propeptide spanning residues 21–44 (EMLDDFDQADEDELLSLIEKEEAR) is cleaved from the precursor. 3 disulfide bridges follow: Cys55–Cys72, Cys62–Cys87, and Cys74–Cys85.

The protein belongs to the neurotoxin 19 (CSTX) family. 01 subfamily. As to expression, expressed by the venom gland.

It localises to the secreted. This chain is U3-lycotoxin-Ls1l, found in Lycosa singoriensis (Wolf spider).